The following is a 310-amino-acid chain: Protein N-terminal asparagine amidohydrolase (310 aa).

Monomer.

It localises to the cytoplasm. The catalysed reaction is N-terminal L-asparaginyl-[protein] + H2O + H(+) = N-terminal L-aspartyl-[protein] + NH4(+). With respect to regulation, inhibited by micromolar concentrations of copper and zinc ions. In terms of biological role, N-terminal asparagine deamidase that mediates deamidation of N-terminal asparagine residues to aspartate. Required for the ubiquitin-dependent turnover of intracellular proteins that initiate with Met-Asn. These proteins are acetylated on the retained initiator methionine and can subsequently be modified by the removal of N-acetyl methionine by acylaminoacid hydrolase (AAH). Conversion of the resulting N-terminal asparagine to aspartate by NTAN1/PNAD renders the protein susceptible to arginylation, polyubiquitination and degradation as specified by the N-end rule. This enzyme does not act on substrates with internal or C-terminal asparagines and does not act on glutamine residues in any position, nor on acetylated N-terminal peptidyl Asn. This Homo sapiens (Human) protein is Protein N-terminal asparagine amidohydrolase (NTAN1).